Here is a 295-residue protein sequence, read N- to C-terminus: Ribosomal protein L11 methyltransferase (295 aa).

Positions 145, 166, 188, and 230 each coordinate S-adenosyl-L-methionine.

This sequence belongs to the methyltransferase superfamily. PrmA family.

It localises to the cytoplasm. The catalysed reaction is L-lysyl-[protein] + 3 S-adenosyl-L-methionine = N(6),N(6),N(6)-trimethyl-L-lysyl-[protein] + 3 S-adenosyl-L-homocysteine + 3 H(+). Functionally, methylates ribosomal protein L11. The protein is Ribosomal protein L11 methyltransferase of Pectobacterium atrosepticum (strain SCRI 1043 / ATCC BAA-672) (Erwinia carotovora subsp. atroseptica).